The chain runs to 512 residues: Retinaldehyde dehydrogenase 3 (512 aa).

The interval 1–22 is disordered; that stretch reads MATTNGAVENGQPDGKPPALPR. Ala2 bears the N-acetylalanine mark. NAD(+) contacts are provided by residues Lys204, Glu207, and 257-262; that span reads GSTEVG. The active-site Proton acceptor is Glu280. The Nucleophile role is filled by Cys314. Positions 361 and 411 each coordinate NAD(+).

This sequence belongs to the aldehyde dehydrogenase family. In terms of assembly, homotetramer. In terms of tissue distribution, detected in embryonic head (at protein level). Ventral retina.

The protein resides in the cytoplasm. It catalyses the reaction retinal + NAD(+) + H2O = retinoate + NADH + 2 H(+). The catalysed reaction is all-trans-retinal + NAD(+) + H2O = all-trans-retinoate + NADH + 2 H(+). It carries out the reaction all-trans-13,14-dihydroretinal + NAD(+) + H2O = all-trans-13,14-dihydroretinoate + NADH + 2 H(+). The protein operates within cofactor metabolism; retinol metabolism. Catalyzes the NAD-dependent oxidation of aldehyde substrates, such as all-trans-retinal and all-trans-13,14-dihydroretinal, to their corresponding carboxylic acids, all-trans-retinoate and all-trans-13,14-dihydroretinoate, respectively. High specificity for all-trans-retinal as substrate, can also accept acetaldehyde as substrate in vitro but with lower affinity. Required for the biosynthesis of normal levels of retinoate in the embryonic ocular and nasal regions; a critical lipid in the embryonic development of the eye and the nasal region. The sequence is that of Retinaldehyde dehydrogenase 3 (Aldh1a3) from Mus musculus (Mouse).